Consider the following 83-residue polypeptide: U25-theraphotoxin-Cg1a (83 aa).

Positions 1–23 (MRFHTLLFLSFLLLVSCALICTA) are cleaved as a signal peptide. Residues 24–48 (QHPGLEKSGMFHENVGKGQHIEEKR) constitute a propeptide that is removed on maturation. Cystine bridges form between Cys50-Cys66, Cys57-Cys71, and Cys65-Cys81.

The protein belongs to the neurotoxin 07 (Beta/delta-agtx) family. 03 (aga-4) subfamily. JZTX sub-subfamily. Expressed by the venom gland.

It localises to the secreted. In terms of biological role, inhibits TTX-sensitive sodium currents in rat dorsal root ganglion (DRG) neurons. This Chilobrachys guangxiensis (Chinese earth tiger tarantula) protein is U25-theraphotoxin-Cg1a.